Here is a 753-residue protein sequence, read N- to C-terminus: Fatty acid oxidation complex subunit alpha (753 aa).

The segment at 8–197 (SVTHPAFTLN…KMGLVDDVVP (190 aa)) is enoyl-CoA hydratase. The segment at 313–747 (RAIHRVGVLG…FYPVDANIDE (435 aa)) is 3-hydroxyacyl-CoA dehydrogenase. The interval 593–622 (SNPTLHSNSTKNSSPTKNGNSPAKRNSFKW) is disordered. Over residues 599-614 (SNSTKNSSPTKNGNSP) the composition is skewed to low complexity.

This sequence in the N-terminal section; belongs to the enoyl-CoA hydratase/isomerase family. The protein in the central section; belongs to the 3-hydroxyacyl-CoA dehydrogenase family. In terms of assembly, heterotetramer of two alpha chains (FadJ) and two beta chains (FadI).

The protein resides in the cytoplasm. The catalysed reaction is a (3S)-3-hydroxyacyl-CoA = a (2E)-enoyl-CoA + H2O. It carries out the reaction a 4-saturated-(3S)-3-hydroxyacyl-CoA = a (3E)-enoyl-CoA + H2O. It catalyses the reaction a (3S)-3-hydroxyacyl-CoA + NAD(+) = a 3-oxoacyl-CoA + NADH + H(+). The enzyme catalyses (3S)-3-hydroxybutanoyl-CoA = (3R)-3-hydroxybutanoyl-CoA. It functions in the pathway lipid metabolism; fatty acid beta-oxidation. Its function is as follows. Catalyzes the formation of a hydroxyacyl-CoA by addition of water on enoyl-CoA. Also exhibits 3-hydroxyacyl-CoA epimerase and 3-hydroxyacyl-CoA dehydrogenase activities. This chain is Fatty acid oxidation complex subunit alpha, found in Yersinia pseudotuberculosis serotype I (strain IP32953).